Here is a 377-residue protein sequence, read N- to C-terminus: Spermidine/putrescine import ATP-binding protein PotA (377 aa).

The ABC transporter domain maps to 18 to 248; the sequence is IRLSGISKSF…PKNLFVARFI (231 aa). 50–57 contacts ATP; the sequence is GPSGCGKT.

Belongs to the ABC transporter superfamily. Spermidine/putrescine importer (TC 3.A.1.11.1) family. As to quaternary structure, the complex is composed of two ATP-binding proteins (PotA), two transmembrane proteins (PotB and PotC) and a solute-binding protein (PotD).

It is found in the cell inner membrane. The catalysed reaction is ATP + H2O + polyamine-[polyamine-binding protein]Side 1 = ADP + phosphate + polyamineSide 2 + [polyamine-binding protein]Side 1.. Functionally, part of the ABC transporter complex PotABCD involved in spermidine/putrescine import. Responsible for energy coupling to the transport system. The polypeptide is Spermidine/putrescine import ATP-binding protein PotA (Vibrio cholerae serotype O1 (strain ATCC 39315 / El Tor Inaba N16961)).